Consider the following 377-residue polypeptide: D-alanine--D-alanine ligase (377 aa).

The region spanning 141–347 (KRILNQAGIR…YSELIDRLIQ (207 aa)) is the ATP-grasp domain. 171 to 226 (KEELGDLVFVKPAKQGSSVGIHKVDTEEEYETAMKDAFTYDYKVLVEAGIKNPREI) contacts ATP. Mg(2+)-binding residues include aspartate 301, glutamate 314, and asparagine 316.

It belongs to the D-alanine--D-alanine ligase family. Mg(2+) is required as a cofactor. It depends on Mn(2+) as a cofactor.

Its subcellular location is the cytoplasm. The enzyme catalyses 2 D-alanine + ATP = D-alanyl-D-alanine + ADP + phosphate + H(+). It participates in cell wall biogenesis; peptidoglycan biosynthesis. Cell wall formation. The chain is D-alanine--D-alanine ligase from Limosilactobacillus fermentum (strain NBRC 3956 / LMG 18251) (Lactobacillus fermentum).